A 161-amino-acid chain; its full sequence is Small ribosomal subunit protein uS19 (161 aa).

Residues 1–19 (MARQKKYSGKGGARKKNKQ) are compositionally biased toward basic residues. The segment at 1-26 (MARQKKYSGKGGARKKNKQKQSVAPR) is disordered.

Belongs to the universal ribosomal protein uS19 family.

In terms of biological role, protein S19 forms a complex with S13 that binds strongly to the 16S ribosomal RNA. In Methanococcus maripaludis (strain C7 / ATCC BAA-1331), this protein is Small ribosomal subunit protein uS19.